We begin with the raw amino-acid sequence, 646 residues long: Choline transporter-like protein 1 (646 aa).

Over 1–27 (MGCCGCGSEEGSVRQWKPLEQRSCTDV) the chain is Cytoplasmic. Residues 28 to 48 (LWLLIFVLFCIGMAIICGFAI) form a helical membrane-spanning segment. Residues 49-207 (ASGAAQRLVF…RVITGVMTSK (159 aa)) are Extracellular-facing. An N-linked (GlcNAc...) asparagine glycan is attached at Asn133. A helical transmembrane segment spans residues 208-228 (EIIVGLCLMSLVLSILLMVII). Residues 229–233 (RYISK) are Cytoplasmic-facing. Residues 234–254 (VLVWILAILTIIGSIGGTAVL) form a helical membrane-spanning segment. At 255-281 (WWLYADHKKTLKLDPSQGDVAADNVTA) the chain is on the extracellular side. N-linked (GlcNAc...) asparagine glycosylation occurs at Asn278. The helical transmembrane segment at 282 to 302 (LLVCAIIATVITVILLLLMLI) threads the bilayer. Residues 303 to 308 (MRKRVA) lie on the Cytoplasmic side of the membrane. A helical transmembrane segment spans residues 309-329 (LTIALFHVAGKVFIHIPFLIF). Residues 330 to 331 (QS) are Extracellular-facing. The chain crosses the membrane as a helical span at residues 332–352 (LWTFLALAFFWIYWIAVLLLL). The Cytoplasmic segment spans residues 353–373 (ATAGYPQKKDQGYVEFKVSGP). A helical transmembrane segment spans residues 374–394 (LQYTWIYHLVGLIWISEFILA). At 395-435 (CQQMTIAGAVVTYYFTRDKHNLPATPILASMCRLIKYHLGT) the chain is on the extracellular side. A helical transmembrane segment spans residues 436-456 (VAKGSFIITLIKIPQMILVYI). Over 457 to 530 (HSQLKGKENA…RVAAINTVGD (74 aa)) the chain is Cytoplasmic. A helical membrane pass occupies residues 531 to 551 (FVLFLGKLLIVLVTGFVGIIL). Topologically, residues 552 to 559 (LNYQRDYT) are extracellular. A helical membrane pass occupies residues 560-580 (VWVLPLIIICLFAFFVSHCFL). Over 581–646 (SIYEMVVDVL…KSMASGSDNA (66 aa)) the chain is Cytoplasmic.

It belongs to the CTL (choline transporter-like) family. Present in myelinated structures from brain and spinal cord (at protein level).

Its subcellular location is the cell membrane. The protein resides in the mitochondrion outer membrane. The catalysed reaction is choline(out) + n H(+)(in) = choline(in) + n H(+)(out). The enzyme catalyses ethanolamine(out) + n H(+)(in) = ethanolamine(in) + n H(+)(out). Its function is as follows. Probable choline transporter. May be involved in membrane synthesis and myelin production. This chain is Choline transporter-like protein 1 (slc44a1), found in Torpedo marmorata (Marbled electric ray).